The chain runs to 292 residues: tRNA-splicing endonuclease (292 aa).

Residues tyrosine 231, histidine 238, and lysine 267 contribute to the active site.

Belongs to the tRNA-intron endonuclease family. Archaeal long subfamily. As to quaternary structure, homodimer.

The catalysed reaction is pretRNA = a 3'-half-tRNA molecule with a 5'-OH end + a 5'-half-tRNA molecule with a 2',3'-cyclic phosphate end + an intron with a 2',3'-cyclic phosphate and a 5'-hydroxyl terminus.. Its function is as follows. Endonuclease that removes tRNA introns. Cleaves pre-tRNA at the 5'- and 3'-splice sites to release the intron. The products are an intron and two tRNA half-molecules bearing 2',3' cyclic phosphate and 5'-OH termini. Recognizes a pseudosymmetric substrate in which 2 bulged loops of 3 bases are separated by a stem of 4 bp. This is tRNA-splicing endonuclease from Thermoplasma volcanium (strain ATCC 51530 / DSM 4299 / JCM 9571 / NBRC 15438 / GSS1).